Consider the following 243-residue polypeptide: Venom peptide isomerase heavy chain (243 aa).

The 243-residue stretch at Ile1–Val243 folds into the Peptidase S1 domain. Cys31 and Cys47 are oxidised to a cystine. Residues His46 and Asp96 each act as charge relay system in the active site. Asn127 carries an N-linked (GlcNAc...) asparagine glycan. 2 cysteine pairs are disulfide-bonded: Cys159/Cys181 and Cys190/Cys219. Ser194 acts as the Charge relay system in catalysis.

The protein belongs to the peptidase S1 family. As to quaternary structure, heterodimer with venom peptide isomerase light chain; disulfide-linked. Post-translationally, N-linked glycan at Asn-127 consists of Man3-GlcNAc2-Fuc. In terms of tissue distribution, expressed by the venom gland.

The protein resides in the secreted. Its function is as follows. Peptide isomerase that inverts the chirality at the Ser-81 of omega-Aga IVB. Acts cofactor-independently. The polypeptide is Venom peptide isomerase heavy chain (Agelenopsis aperta (North American funnel-web spider)).